The chain runs to 243 residues: DNA repair protein RecO (243 aa).

This sequence belongs to the RecO family.

Its function is as follows. Involved in DNA repair and RecF pathway recombination. The chain is DNA repair protein RecO from Serratia proteamaculans (strain 568).